A 54-amino-acid chain; its full sequence is Photosystem II reaction center protein K (54 aa).

A propeptide spanning residues 1–17 is cleaved from the precursor; the sequence is MSFITLNNFFNTNTFFG. A helical transmembrane segment spans residues 29–49; sequence LIDVLPIIPVLFFLLAFVWQA.

Belongs to the PsbK family. In terms of assembly, PSII is composed of 1 copy each of membrane proteins PsbA, PsbB, PsbC, PsbD, PsbE, PsbF, PsbH, PsbI, PsbJ, PsbK, PsbL, PsbM, PsbT, PsbY, PsbZ, Psb30/Ycf12, at least 3 peripheral proteins of the oxygen-evolving complex and a large number of cofactors. It forms dimeric complexes.

It localises to the plastid. The protein localises to the chloroplast thylakoid membrane. One of the components of the core complex of photosystem II (PSII). PSII is a light-driven water:plastoquinone oxidoreductase that uses light energy to abstract electrons from H(2)O, generating O(2) and a proton gradient subsequently used for ATP formation. It consists of a core antenna complex that captures photons, and an electron transfer chain that converts photonic excitation into a charge separation. The chain is Photosystem II reaction center protein K from Euglena gracilis.